We begin with the raw amino-acid sequence, 75 residues long: Alpha-elapitoxin-Bc2c (75 aa).

An N-terminal signal peptide occupies residues 1 to 2 (YT). 5 cysteine pairs are disulfide-bonded: C5/C24, C17/C45, C30/C34, C49/C60, and C61/C66.

This sequence belongs to the three-finger toxin family. Long-chain subfamily. Type II alpha-neurotoxin sub-subfamily. In terms of assembly, monomer in solution, homodimer in crystal state. In terms of tissue distribution, expressed by the venom gland.

The protein localises to the secreted. Binds to muscular and neuronal nicotinic acetylcholine receptor (nAChR) and inhibits acetylcholine from binding to the receptor, thereby impairing neuromuscular and neuronal transmission. Blocks muscle type nAChR. Also binds with high affinity to alpha-7/CHRNA7 nAChRs. In addition, shows a weak inhibition of neuronal alpha-3-beta-2/CHRNA3-CHRNB2 nAChR. Selectively binds to alpha-1-delta subunit interface of the mouse muscle nicotinic acetylcholine receptor, with a 10-fold higher affinity for the adult than for the fetal receptors. In vivo, when intraperitoneally injected into mice, causes flaccid paralysis and respiratory distress, followed by death within 2-4 hours. The protein is Alpha-elapitoxin-Bc2c of Bungarus candidus (Malayan krait).